Consider the following 301-residue polypeptide: Small ribosomal subunit protein uS2 (301 aa).

Residues 237-301 form a disordered region; it reads PTESWNDTVV…QDWSNSTSQW (65 aa). A compositionally biased stretch (low complexity) spans 264-278; that stretch reads PQYAPAPQAAAAPVA.

Belongs to the universal ribosomal protein uS2 family. As to quaternary structure, component of the small ribosomal subunit. Mature ribosomes consist of a small (40S) and a large (60S) subunit. The 40S subunit contains about 33 different proteins and 1 molecule of RNA (18S). The 60S subunit contains about 49 different proteins and 3 molecules of RNA (28S, 5.8S and 5S). Interacts with ribosomal protein S21.

Its subcellular location is the cytoplasm. Functionally, required for the assembly and/or stability of the 40S ribosomal subunit. Required for the processing of the 20S rRNA-precursor to mature 18S rRNA in a late step of the maturation of 40S ribosomal subunits. In Diaphorina citri (Asian citrus psyllid), this protein is Small ribosomal subunit protein uS2.